Reading from the N-terminus, the 254-residue chain is Claudin-16 (254 aa).

Over 1 to 22 (MGPGLAASHVSFPDSLLAKMRD) the chain is Cytoplasmic. The chain crosses the membrane as a helical span at residues 23-43 (LLQYVACFFAFFSAGFLVVAT). Residues 44-98 (WTDCWMVNADDSLEVSTKCRGLWWECVTNAFDGIRTCDEYDSILAEHSLKLVVTR) lie on the Extracellular side of the membrane. The chain crosses the membrane as a helical span at residues 99–119 (ALMITADILAGFGFITLLLGL). At 120–134 (DCVKFLPDEPYIKVR) the chain is on the cytoplasmic side. Residues 135 to 155 (ISFVAGTTLLIAGAPGIIGSV) form a helical membrane-spanning segment. Residues 156 to 188 (WYAVDVYVERSSLVLHNIFLGIQYKFGWSCWLG) are Extracellular-facing. Residues 189-209 (MAGSLGCFLAGAILTCCLYLF) traverse the membrane as a helical segment. The Cytoplasmic portion of the chain corresponds to 210-254 (KDVGPERSYPYSTRKAYSTTAVSMPRSHAIPRTQTAKMYAVDTRV). Positions 252–254 (TRV) match the Interaction with TJP1 motif.

This sequence belongs to the claudin family. As to quaternary structure, can form heteropolymeric tight junction strands with other claudins. Interacts with CLDN19. Interacts (via PDZ-binding motif TRV) with TJP1 (via PDZ domain). Cannot form tight junction strands on its own. As to expression, expressed preferentially in kidney.

The protein localises to the cell junction. It localises to the tight junction. Its subcellular location is the cell membrane. The catalysed reaction is Mg(2+)(in) = Mg(2+)(out). The enzyme catalyses Ca(2+)(in) = Ca(2+)(out). It catalyses the reaction Na(+)(in) = Na(+)(out). It carries out the reaction K(+)(in) = K(+)(out). The catalysed reaction is Rb(+)(in) = Rb(+)(out). The enzyme catalyses Cs(+)(in) = Cs(+)(out). It catalyses the reaction Li(+)(in) = Li(+)(out). Its function is as follows. Forms paracellular channels: coassembles with CLDN19 into tight junction strands with cation-selective channels through the strands, conveying epithelial permeability in a process known as paracellular tight junction permeability. Involved in the maintenance of ion gradients along the nephron. In the thick ascending limb (TAL) of Henle's loop, facilitates sodium paracellular permeability from the interstitial compartment to the lumen, contributing to the lumen-positive transepithelial potential that drives paracellular magnesium and calcium reabsorption. The polypeptide is Claudin-16 (CLDN16) (Bos taurus (Bovine)).